A 785-amino-acid polypeptide reads, in one-letter code: Phenylalanine--tRNA ligase beta subunit (785 aa).

Residues 38 to 150 form the tRNA-binding domain; the sequence is CEHLKTFVIA…NTYNVGDTFF (113 aa). One can recognise a B5 domain in the interval 394–470; that stretch reads VDNIELNFFP…RLYGYDKICE (77 aa). Residues aspartate 448, aspartate 454, glutamate 457, and glutamate 458 each contribute to the Mg(2+) site. Residues 690–783 enclose the FDX-ACB domain; sequence SCYQSVKRDF…VAEKLGGVLR (94 aa).

It belongs to the phenylalanyl-tRNA synthetase beta subunit family. Type 1 subfamily. Tetramer of two alpha and two beta subunits. Requires Mg(2+) as cofactor.

The protein localises to the cytoplasm. The enzyme catalyses tRNA(Phe) + L-phenylalanine + ATP = L-phenylalanyl-tRNA(Phe) + AMP + diphosphate + H(+). The protein is Phenylalanine--tRNA ligase beta subunit of Ehrlichia canis (strain Jake).